Reading from the N-terminus, the 450-residue chain is Ornithine decarboxylase (450 aa).

An N6-(pyridoxal phosphate)lysine modification is found at lysine 59. Pyridoxal 5'-phosphate-binding positions include serine 190, glycine 227, and 264–267 (EPGR). Residue serine 293 is modified to Phosphoserine; by CK2. 321–322 (YD) lines the substrate pocket. The active-site Proton donor; shared with dimeric partner is cysteine 350. Aspartate 351 lines the substrate pocket. Residue tyrosine 379 participates in pyridoxal 5'-phosphate binding.

It belongs to the Orn/Lys/Arg decarboxylase class-II family. As to quaternary structure, homodimer. Only the dimer is catalytically active, as the active sites are constructed of residues from both monomers. It depends on pyridoxal 5'-phosphate as a cofactor.

The catalysed reaction is L-ornithine + H(+) = putrescine + CO2. Its pathway is amine and polyamine biosynthesis; putrescine biosynthesis via L-ornithine pathway; putrescine from L-ornithine: step 1/1. Inhibited by antizymes (AZs) in response to polyamine levels. AZs inhibit the assembly of the functional homodimer by binding to ODC monomers and targeting them for ubiquitin-independent proteolytic destruction by the 26S proteasome. Functionally, catalyzes the first and rate-limiting step of polyamine biosynthesis that converts ornithine into putrescine, which is the precursor for the polyamines, spermidine and spermine. Polyamines are essential for cell proliferation and are implicated in cellular processes, ranging from DNA replication to apoptosis. This is Ornithine decarboxylase (ODC1) from Gallus gallus (Chicken).